We begin with the raw amino-acid sequence, 351 residues long: Nicotinate-nucleotide--dimethylbenzimidazole phosphoribosyltransferase (351 aa).

The active-site Proton acceptor is the glutamate 317.

The protein belongs to the CobT family.

It catalyses the reaction 5,6-dimethylbenzimidazole + nicotinate beta-D-ribonucleotide = alpha-ribazole 5'-phosphate + nicotinate + H(+). Its pathway is nucleoside biosynthesis; alpha-ribazole biosynthesis; alpha-ribazole from 5,6-dimethylbenzimidazole: step 1/2. Functionally, catalyzes the synthesis of alpha-ribazole-5'-phosphate from nicotinate mononucleotide (NAMN) and 5,6-dimethylbenzimidazole (DMB). In Pseudomonas fluorescens (strain ATCC BAA-477 / NRRL B-23932 / Pf-5), this protein is Nicotinate-nucleotide--dimethylbenzimidazole phosphoribosyltransferase.